The chain runs to 288 residues: ATP synthase gamma chain (288 aa).

The protein belongs to the ATPase gamma chain family. As to quaternary structure, F-type ATPases have 2 components, CF(1) - the catalytic core - and CF(0) - the membrane proton channel. CF(1) has five subunits: alpha(3), beta(3), gamma(1), delta(1), epsilon(1). CF(0) has three main subunits: a, b and c.

Its subcellular location is the cell inner membrane. Its function is as follows. Produces ATP from ADP in the presence of a proton gradient across the membrane. The gamma chain is believed to be important in regulating ATPase activity and the flow of protons through the CF(0) complex. The sequence is that of ATP synthase gamma chain from Rickettsia prowazekii (strain Madrid E).